The primary structure comprises 1061 residues: Translation initiation factor IF-2 (1061 aa).

Disordered stretches follow at residues F51 to K199 and A250 to E460. The segment covering N67–R77 has biased composition (basic and acidic residues). Low complexity-rich tracts occupy residues V97–V113, R120–A130, V167–V177, T184–K199, and A250–P278. The span at P279–P291 shows a compositional bias: pro residues. Over residues S340–G360 the composition is skewed to gly residues. A compositionally biased stretch (low complexity) spans G381–G391. The segment covering Q392–A405 has biased composition (gly residues). The 177-residue stretch at S552–K728 folds into the tr-type G domain. Positions G561–T568 are G1. G561–T568 serves as a coordination point for GTP. The interval G586–H590 is G2. The interval D614–G617 is G3. GTP contacts are provided by residues D614–H618 and N668–D671. Residues N668 to D671 form a G4 region. Positions S704 to K706 are G5.

The protein belongs to the TRAFAC class translation factor GTPase superfamily. Classic translation factor GTPase family. IF-2 subfamily.

Its subcellular location is the cytoplasm. Functionally, one of the essential components for the initiation of protein synthesis. Protects formylmethionyl-tRNA from spontaneous hydrolysis and promotes its binding to the 30S ribosomal subunits. Also involved in the hydrolysis of GTP during the formation of the 70S ribosomal complex. This Acidobacterium capsulatum (strain ATCC 51196 / DSM 11244 / BCRC 80197 / JCM 7670 / NBRC 15755 / NCIMB 13165 / 161) protein is Translation initiation factor IF-2.